The sequence spans 225 residues: Membrane protein (225 aa).

Residues 1 to 20 are Virion surface-facing; the sequence is MPNETNCTLDFEQSVQLFKE. A helical membrane pass occupies residues 21–41; sequence YNLFITAFLLFLTIILQYGYA. The Intravirion portion of the chain corresponds to 42–51; that stretch reads TRSKVIYTLK. A helical transmembrane segment spans residues 52 to 72; it reads MIVLWCFWPLNIAVGVISCTY. Topologically, residues 73 to 77 are virion surface; sequence PPNTG. The helical transmembrane segment at 78-98 threads the bilayer; it reads GLVAAIILTVFACLSFVGYWI. At 99–225 the chain is on the intravirion side; that stretch reads QSIRLFKRCR…VATGGSSLYT (127 aa).

Belongs to the gammacoronaviruses M protein family. In terms of assembly, homomultimer. Interacts with envelope E protein in the budding compartment of the host cell, which is located between endoplasmic reticulum and the Golgi complex. Forms a complex with HE and S proteins. Interacts with nucleocapsid N protein. This interaction probably participates in RNA packaging into the virus.

Its subcellular location is the virion membrane. It localises to the host Golgi apparatus membrane. In terms of biological role, component of the viral envelope that plays a central role in virus morphogenesis and assembly via its interactions with other viral proteins. This is Membrane protein from Avian infectious bronchitis virus (strain Beaudette) (IBV).